The following is a 274-amino-acid chain: 2,3,4,5-tetrahydropyridine-2,6-dicarboxylate N-succinyltransferase (274 aa).

This sequence belongs to the transferase hexapeptide repeat family.

Its subcellular location is the cytoplasm. It carries out the reaction (S)-2,3,4,5-tetrahydrodipicolinate + succinyl-CoA + H2O = (S)-2-succinylamino-6-oxoheptanedioate + CoA. It functions in the pathway amino-acid biosynthesis; L-lysine biosynthesis via DAP pathway; LL-2,6-diaminopimelate from (S)-tetrahydrodipicolinate (succinylase route): step 1/3. This chain is 2,3,4,5-tetrahydropyridine-2,6-dicarboxylate N-succinyltransferase, found in Salmonella heidelberg (strain SL476).